The chain runs to 156 residues: Dynein 16 kDa light chain, flagellar outer arm (156 aa).

Positions 2-116 (AAGLPPVQYS…LNQQVLSLTP (115 aa)) constitute a Thioredoxin domain. Residues Cys-37 and Cys-40 are joined by a disulfide bond.

Consists of at least 3 heavy chains (alpha, beta and gamma), 2 intermediate chains and 8 light chains.

It is found in the cell projection. Its subcellular location is the cilium. The protein resides in the flagellum. It localises to the cytoplasm. The protein localises to the cytoskeleton. It is found in the flagellum axoneme. Its function is as follows. May be involved in regulating the redox state of functionally important thiol groups within dynein. The sequence is that of Dynein 16 kDa light chain, flagellar outer arm from Chlamydomonas reinhardtii (Chlamydomonas smithii).